We begin with the raw amino-acid sequence, 154 residues long: Major allergen Dau c 1 (154 aa).

This sequence belongs to the BetVI family. Homodimer.

The polypeptide is Major allergen Dau c 1 (Daucus carota (Wild carrot)).